The following is a 210-amino-acid chain: HTH-type transcriptional repressor FabR (210 aa).

An HTH tetR-type domain is found at 10–70; sequence KTRRSLVEAA…TMVDESGLML (61 aa). The segment at residues 33-52 is a DNA-binding region (H-T-H motif); sequence SLREVAREAGIAPTSFYRHF.

In terms of assembly, homodimer.

The protein localises to the cytoplasm. Functionally, represses the transcription of fabB, involved in unsaturated fatty acid (UFA) biosynthesis. By controlling UFA production, FabR directly influences the physical properties of the membrane bilayer. The polypeptide is HTH-type transcriptional repressor FabR (Citrobacter koseri (strain ATCC BAA-895 / CDC 4225-83 / SGSC4696)).